Consider the following 116-residue polypeptide: Helper of Tim protein 13 (116 aa).

A CHY-type; degenerate zinc finger spans residues 10 to 94 (TVDDQSRCVH…SNLICPNCRS (85 aa)). Zn(2+) contacts are provided by Cys-17, His-19, Cys-40, Cys-43, Cys-68, Cys-71, Cys-89, and Cys-92.

Interacts with the small Tim proteins TIM8, TIM9, TIM10, TIM12, and TIM13.

The protein localises to the mitochondrion intermembrane space. It is found in the mitochondrion membrane. Its function is as follows. Required for the assembly or recycling of the small Tim proteins in the mitochondrial intermembrane, thereby participating in the import and insertion of multi-pass transmembrane proteins into the mitochondrial inner membrane. Probably acts by facilitating the formation of disulfide bonds in small Tim proteins. This chain is Helper of Tim protein 13 (HOT13), found in Saccharomyces cerevisiae (strain ATCC 204508 / S288c) (Baker's yeast).